A 1252-amino-acid polypeptide reads, in one-letter code: Plasma membrane calcium-transporting ATPase mca-1 (1252 aa).

The Cytoplasmic portion of the chain corresponds to 1-121 (MQKSQNVTAV…VRLVLDACKD (121 aa)). A helical transmembrane segment spans residues 122-142 (PTLVILVLSGFINLALSFYEP). Residues 143–180 (TSAAEDATQHLVNATTAAILANGTFMSTTEAPSEGHGT) lie on the Extracellular side of the membrane. N-linked (GlcNAc...) asparagine glycans are attached at residues Asn155 and Asn164. The helical transmembrane segment at 181–201 (AWIEGVAILLCVIVVVLVTAV) threads the bilayer. Residues 202–376 (NDYSKERQFR…KSVLQAKLSK (175 aa)) lie on the Cytoplasmic side of the membrane. The segment at 330–361 (DDSTSTSSSSSSSSSSSGSSSNGSSDSSKSGD) is disordered. Residues 333–357 (TSTSSSSSSSSSSSGSSSNGSSDSS) show a composition bias toward low complexity. The helical transmembrane segment at 377-397 (LALQIIYCGTTIAIIALIVLV) threads the bilayer. At 398–422 (TRFCLDHYVFEKNEFSLVDIQMFVK) the chain is on the extracellular side. A helical transmembrane segment spans residues 423–443 (FFIIAVTILVISIPEGLPLAI). The Ca(2+) site is built by Val432, Ile435, and Glu437. Residues 444–879 (ALALTYSVRK…GRNVYDSISK (436 aa)) lie on the Cytoplasmic side of the membrane. Asp479 functions as the 4-aspartylphosphate intermediate in the catalytic mechanism. Asp479 and Thr481 together coordinate Mg(2+). Residues Thr481, Glu553, Lys612, Thr733, Gly734, Asp735, Arg792, and Lys798 each coordinate ATP. Position 822 (Asp822) interacts with Mg(2+). Asn825 contributes to the ATP binding site. The helical transmembrane segment at 880–900 (FLQFQLTVNVVAVITAFVGAV) threads the bilayer. Ca(2+) is bound at residue Asn888. Residues 901–908 (TVSDSPLK) are Extracellular-facing. Residues 909-929 (AVHMLWINLIMDTLASLALAT) form a helical membrane-spanning segment. Residues Asn916 and Asp920 each coordinate Ca(2+). Topologically, residues 930–960 (EQPTDELLERKPYGRKKSLISRTMVKNILCH) are cytoplasmic. A helical membrane pass occupies residues 961–981 (ALYQLIIIFVIFFYGDTIFGI). Residues 982-989 (KTGLYAPL) are Extracellular-facing. The helical transmembrane segment at 990-1010 (FAPPSQHFTLVFNAFVMMTVF) threads the bilayer. Residues 1011–1035 (NEINARKVHGERNVFKGLASNRVFC) lie on the Cytoplasmic side of the membrane. Residues 1036–1056 (VIWVTTFIAQIIIVQFGGAWF) traverse the membrane as a helical segment. Residues 1057–1065 (STAPLTLQQ) lie on the Extracellular side of the membrane. The helical transmembrane segment at 1066 to 1086 (WIVCLVLGFSTLIWGQIVATI) threads the bilayer. Residues 1087 to 1252 (PSKKLPKAWK…NVDMEDIELN (166 aa)) lie on the Cytoplasmic side of the membrane. A calmodulin-binding subdomain A region spans residues 1124–1142 (LRRSGKSLWVRGMFIIGNH). The segment at 1143 to 1152 (LRVLRAFGME) is calmodulin-binding subdomain B. Positions 1181 to 1252 (YRHQKHQEKK…NVDMEDIELN (72 aa)) are disordered.

This sequence belongs to the cation transport ATPase (P-type) (TC 3.A.3) family. Type IIB subfamily. In terms of assembly, interacts with calmodulin.

The protein localises to the cell membrane. The catalysed reaction is Ca(2+)(in) + ATP + H2O = Ca(2+)(out) + ADP + phosphate + H(+). Catalyzes the hydrolysis of ATP coupled with the transport of calcium across a membrane. In Caenorhabditis elegans, this protein is Plasma membrane calcium-transporting ATPase mca-1.